Here is a 133-residue protein sequence, read N- to C-terminus: uncharacterized protein (133 aa).

The segment at residues 1–82 is a DNA-binding region (recombinase); the sequence is MIDKIKKGYS…QKMLHDRQNF (82 aa).

This is an uncharacterized protein from Bacillus phage phi105 (Bacteriophage phi-105).